The following is a 187-amino-acid chain: MQRLWVTGYRSYELNTFSDNDPKIAVVKYVLKRRFVDLIEEGQLDWIITGANLGVEQWAAEVGLELSQRYPIRTSIMVPYENFADRWNENNQSKFLNLKESVDFFASTSDRPYYNSVQLRNYQNFMIQHTDRAIMIYDLEHPGKPKYDYNLIQKYQETKEYPLDLIDFYELQDMAEEYQENRKNDMY.

The protein belongs to the UPF0398 family.

The chain is UPF0398 protein LBA1157 from Lactobacillus acidophilus (strain ATCC 700396 / NCK56 / N2 / NCFM).